Consider the following 544-residue polypeptide: Chaperonin GroEL (544 aa).

ATP contacts are provided by residues 29–32, 86–90, glycine 413, 477–479, and aspartate 493; these read TLGP, DGTTT, and DVL.

It belongs to the chaperonin (HSP60) family. Forms a cylinder of 14 subunits composed of two heptameric rings stacked back-to-back. Interacts with the co-chaperonin GroES.

It localises to the cytoplasm. It catalyses the reaction ATP + H2O + a folded polypeptide = ADP + phosphate + an unfolded polypeptide.. Together with its co-chaperonin GroES, plays an essential role in assisting protein folding. The GroEL-GroES system forms a nano-cage that allows encapsulation of the non-native substrate proteins and provides a physical environment optimized to promote and accelerate protein folding. In Clostridium kluyveri (strain NBRC 12016), this protein is Chaperonin GroEL.